The following is a 579-amino-acid chain: MRNATSWSLYRRLLSYVRPYWKAFLAAVVGYAIYAASSTALAEMMKRLIDGIQNPDAAFRLMLPLFVIGMFAARGVGTFLGTYYMSDVARNVVHALRCEVFNHMLRLPGRFFDMHSSGHLLSRVTYHVEQVTGAATNAITIILREGLFVIGLVSYLLWTNWMLTLIFMAVTPLIGLVVNYTSKRFRRLSRRIQNSMGDVTHVASEALSGYRVVRTHGAEAYEKARFAEASDYNREQSMKVALTKAVSTPVIQLLVALSLAGLVWLAMSPALMASMTPGEFVAFITAASLMAKPVRQLTEVNSTIQKGLSASQELFGLLEQPPEVDEGSYVPARIDGRVRFEGVRFRYGEDQAEVLKGIDLDVPQGEMIAIVGRSGSGKSTLVSLMPRFYRPTEGRVLLDDVDIQEYALSPLRQRIALVSQQVTLFNTTIAANIAYGHPDADREAVESAARSAYAHEFIERLPNGYDTVVGDNGVMLSGGQRQRLAIARAIFKDAPLLVLDEATSALDTESERYIQQALERVCRGRTTFVIAHRLSTIERADRILVMEQGEIIESGTHGELLAQDGAYAALHQLQFQEAE.

4 consecutive transmembrane segments (helical) span residues 24–44 (FLAAVVGYAIYAASSTALAEM), 61–81 (LMLPLFVIGMFAARGVGTFLG), 147–167 (LFVIGLVSYLLWTNWMLTLIF), and 253–273 (LLVALSLAGLVWLAMSPALMA). The 282-residue stretch at 25 to 306 (LAAVVGYAIY…LTEVNSTIQK (282 aa)) folds into the ABC transmembrane type-1 domain. The ABC transporter domain occupies 338–573 (VRFEGVRFRY…DGAYAALHQL (236 aa)). 372–379 (GRSGSGKS) is an ATP binding site.

It belongs to the ABC transporter superfamily. Lipid exporter (TC 3.A.1.106) family. In terms of assembly, homodimer.

The protein localises to the cell inner membrane. It carries out the reaction ATP + H2O + lipid A-core oligosaccharideSide 1 = ADP + phosphate + lipid A-core oligosaccharideSide 2.. Involved in lipopolysaccharide (LPS) biosynthesis. Translocates lipid A-core from the inner to the outer leaflet of the inner membrane. Transmembrane domains (TMD) form a pore in the inner membrane and the ATP-binding domain (NBD) is responsible for energy generation. The polypeptide is ATP-dependent lipid A-core flippase (Chromohalobacter salexigens (strain ATCC BAA-138 / DSM 3043 / CIP 106854 / NCIMB 13768 / 1H11)).